A 167-amino-acid polypeptide reads, in one-letter code: Mediator of RNA polymerase II transcription subunit 10 (167 aa).

The tract at residues 53-88 (LSTHTKPQPPSQDEEQKEKQDDTPEGSANDPLLRDI) is disordered.

This sequence belongs to the Mediator complex subunit 10 family. As to quaternary structure, component of the Mediator complex.

The protein localises to the nucleus. Its function is as follows. Component of the Mediator complex, a coactivator involved in the regulated transcription of nearly all RNA polymerase II-dependent genes. Mediator functions as a bridge to convey information from gene-specific regulatory proteins to the basal RNA polymerase II transcription machinery. Mediator is recruited to promoters by direct interactions with regulatory proteins and serves as a scaffold for the assembly of a functional preinitiation complex with RNA polymerase II and the general transcription factors. The sequence is that of Mediator of RNA polymerase II transcription subunit 10 (nut2) from Neosartorya fischeri (strain ATCC 1020 / DSM 3700 / CBS 544.65 / FGSC A1164 / JCM 1740 / NRRL 181 / WB 181) (Aspergillus fischerianus).